Reading from the N-terminus, the 259-residue chain is Glutamate racemase (259 aa).

Substrate contacts are provided by residues Asp-7–Ser-8 and Tyr-39–Gly-40. Cys-70 serves as the catalytic Proton donor/acceptor. Position 71–72 (Asn-71–Thr-72) interacts with substrate. Cys-180 serves as the catalytic Proton donor/acceptor. Residue Thr-181–His-182 coordinates substrate.

The protein belongs to the aspartate/glutamate racemases family.

The enzyme catalyses L-glutamate = D-glutamate. The protein operates within cell wall biogenesis; peptidoglycan biosynthesis. Functionally, provides the (R)-glutamate required for cell wall biosynthesis. The sequence is that of Glutamate racemase from Persephonella marina (strain DSM 14350 / EX-H1).